A 188-amino-acid polypeptide reads, in one-letter code: Adrenodoxin, mitochondrial (188 aa).

The transit peptide at 1 to 64 directs the protein to the mitochondrion; the sequence is MAAAPGARLL…RPLSVSARAR (64 aa). The residue at position 67 (serine 67) is a Phosphoserine. The 107-residue stretch at 69-175 folds into the 2Fe-2S ferredoxin-type domain; it reads DKVTVHFKNR…NMTVRVPEAV (107 aa). Residue lysine 70 is modified to N6-acetyllysine; alternate. Lysine 70 carries the N6-succinyllysine; alternate modification. Residues cysteine 110, cysteine 116, cysteine 119, and cysteine 156 each contribute to the [2Fe-2S] cluster site. An N6-succinyllysine modification is found at lysine 162. Serine 181 carries the post-translational modification Phosphoserine.

This sequence belongs to the adrenodoxin/putidaredoxin family. As to quaternary structure, interacts with CYP11A1. It depends on [2Fe-2S] cluster as a cofactor. As to expression, found in all tissues, most abundant in adrenals, ovaries and testes.

Its subcellular location is the mitochondrion matrix. Essential for the synthesis of various steroid hormones. Participates in the reduction of mitochondrial cytochrome P450 for steroidogenesis. Transfers electrons from adrenodoxin reductase to CYP11A1, a cytochrome P450 that catalyzes cholesterol side-chain cleavage. Does not form a ternary complex with adrenodoxin reductase and CYP11A1 but shuttles between the two enzymes to transfer electrons. The sequence is that of Adrenodoxin, mitochondrial (Fdx1) from Rattus norvegicus (Rat).